Consider the following 285-residue polypeptide: UPF0354 protein SH1179 (285 aa).

It belongs to the UPF0354 family.

This Staphylococcus haemolyticus (strain JCSC1435) protein is UPF0354 protein SH1179.